A 197-amino-acid polypeptide reads, in one-letter code: Probable GTP-binding protein EngB (197 aa).

In terms of domain architecture, EngB-type G spans 22–195; sequence GYPEIALVGR…WNWIEAQAFG (174 aa). Residues 30–37, 57–61, 75–78, 142–145, and 174–176 contribute to the GTP site; these read GRSNVGKS, GKTQT, DVPG, TKSD, and FSA. Positions 37 and 59 each coordinate Mg(2+).

This sequence belongs to the TRAFAC class TrmE-Era-EngA-EngB-Septin-like GTPase superfamily. EngB GTPase family. Requires Mg(2+) as cofactor.

In terms of biological role, necessary for normal cell division and for the maintenance of normal septation. The protein is Probable GTP-binding protein EngB of Levilactobacillus brevis (strain ATCC 367 / BCRC 12310 / CIP 105137 / JCM 1170 / LMG 11437 / NCIMB 947 / NCTC 947) (Lactobacillus brevis).